Reading from the N-terminus, the 231-residue chain is MLDPKVIVALDYPNQDAALAFVDRIEPGSCRLKVGKEMFTLYGPDFVRKLHECGHSVFLDLKFHDIPNTCSRAVAAAAELGVWMVNVHASGGERMMAASRDILEPYGKDRPLLIAVTVLTSMEASDLAGIGIACAPQEQVLNLATLTKNSGLDGVVCSAQESTMLKSALGKEFQLITPGIRPVGSAAGDQRRVMTPVEAVSAGSDYLVIGRPITQATDPSAVLAEINQSLA.

Substrate is bound by residues Asp-11, Lys-33, 60 to 69 (DLKFHDIPNT), Thr-120, Arg-181, Gln-190, Gly-210, and Arg-211. Catalysis depends on Lys-62, which acts as the Proton donor.

It belongs to the OMP decarboxylase family. Type 1 subfamily. In terms of assembly, homodimer.

It catalyses the reaction orotidine 5'-phosphate + H(+) = UMP + CO2. It participates in pyrimidine metabolism; UMP biosynthesis via de novo pathway; UMP from orotate: step 2/2. Functionally, catalyzes the decarboxylation of orotidine 5'-monophosphate (OMP) to uridine 5'-monophosphate (UMP). This is Orotidine 5'-phosphate decarboxylase from Photobacterium profundum (strain SS9).